The sequence spans 159 residues: Transcriptional repressor NrdR (159 aa).

The interval M1–D21 is disordered. The segment at C3–C34 is a zinc-finger region. The ATP-cone domain occupies L49–E139.

This sequence belongs to the NrdR family. It depends on Zn(2+) as a cofactor.

Functionally, negatively regulates transcription of bacterial ribonucleotide reductase nrd genes and operons by binding to NrdR-boxes. This is Transcriptional repressor NrdR from Streptococcus thermophilus (strain ATCC BAA-491 / LMD-9).